A 175-amino-acid chain; its full sequence is Sec-independent protein translocase protein TatB (175 aa).

A helical membrane pass occupies residues 1-21 (MLDLGLSKMALIGVVALVVLG). Residues 155-175 (SGAARVARHQPASLRRPTRFF) form a disordered region.

This sequence belongs to the TatB family. In terms of assembly, the Tat system comprises two distinct complexes: a TatABC complex, containing multiple copies of TatA, TatB and TatC subunits, and a separate TatA complex, containing only TatA subunits. Substrates initially bind to the TatABC complex, which probably triggers association of the separate TatA complex to form the active translocon.

Its subcellular location is the cell inner membrane. Its function is as follows. Part of the twin-arginine translocation (Tat) system that transports large folded proteins containing a characteristic twin-arginine motif in their signal peptide across membranes. Together with TatC, TatB is part of a receptor directly interacting with Tat signal peptides. TatB may form an oligomeric binding site that transiently accommodates folded Tat precursor proteins before their translocation. The sequence is that of Sec-independent protein translocase protein TatB from Burkholderia lata (strain ATCC 17760 / DSM 23089 / LMG 22485 / NCIMB 9086 / R18194 / 383).